The following is an 86-amino-acid chain: Large ribosomal subunit protein bL27 (86 aa).

It belongs to the bacterial ribosomal protein bL27 family.

The protein is Large ribosomal subunit protein bL27 of Koribacter versatilis (strain Ellin345).